The sequence spans 125 residues: Ribonuclease VapC19 (125 aa).

Residues 3-122 (LIDTTIAVDH…RHFPMFPDLQ (120 aa)) enclose the PINc domain. Residues aspartate 5 and aspartate 93 each coordinate Mg(2+).

Belongs to the PINc/VapC protein family. Mg(2+) is required as a cofactor.

Its function is as follows. Toxic component of a type II toxin-antitoxin (TA) system. An RNase. Its toxic effect is neutralized by coexpression with cognate antitoxin VapB19. This Mycobacterium tuberculosis (strain CDC 1551 / Oshkosh) protein is Ribonuclease VapC19.